We begin with the raw amino-acid sequence, 103 residues long: Large ribosomal subunit protein bL21 (103 aa).

Belongs to the bacterial ribosomal protein bL21 family. As to quaternary structure, part of the 50S ribosomal subunit. Contacts protein L20.

Its function is as follows. This protein binds to 23S rRNA in the presence of protein L20. This is Large ribosomal subunit protein bL21 from Vibrio cholerae serotype O1 (strain ATCC 39541 / Classical Ogawa 395 / O395).